Here is a 61-residue protein sequence, read N- to C-terminus: Chromatin protein Cren7 (61 aa).

The protein belongs to the Cren7 family. In terms of assembly, monomer. In terms of processing, methylated at multiple sites, to varying extents.

It localises to the chromosome. Its subcellular location is the cytoplasm. Functionally, a chromatin protein, binds double-stranded DNA without sequence specificity. Constrains negative DNA supercoils. The chain is Chromatin protein Cren7 from Caldivirga maquilingensis (strain ATCC 700844 / DSM 13496 / JCM 10307 / IC-167).